The following is a 1133-amino-acid chain: RNA-dependent RNA polymerase 2 (1133 aa).

Mg(2+) is bound by residues aspartate 830, aspartate 832, and aspartate 834.

Belongs to the RdRP family. As to quaternary structure, interacts with NRPD1 and SHH1. Associates with Pol IV complex, forming an interpolymerase channel bridging their active sites, through which the Pol IV-generated transcript is handed over to the RDR2 active site after being backtracked, where it is used as the template for double-stranded RNA (dsRNA) synthesis. Interacts with JMJ24.

It is found in the nucleus. The protein localises to the nucleoplasm. The protein resides in the nucleolus. It catalyses the reaction RNA(n) + a ribonucleoside 5'-triphosphate = RNA(n+1) + diphosphate. RNA-dependent direct polymerase involved in the production of small interfering RNAs (siRNAs). Binds to single-stranded RNA (ssRNA); engages ssRNAs longer than 7 nucleotides and initiates internal to their 3' ends. Able to transcribe the RNA of an RNA/DNA hybrid, the transcript produced by Pol IV, if its 3' end is accessible, to generate double-stranded small interfering RNAs (dsRNAs) precursor essential for establishing and maintaining DNA methylation. Required for the biogenesis of endogenous siRNAs of 24 nucleotide which derive from heterochromatin and DNA repeats such as transposons or endogenous gene tandem repeats, such as repeats present in FWA gene. Involved in transcriptional gene silencing (TGS). Component of the RNA-directed DNA methylation (RdDM) silencing pathway that utilizes siRNAs to guide DNA methyltransferases to asymmetric cytosines. Involved in control of flowering time through RdDM of FWA locus. Required for reception of long-distance mRNA silencing in the shoot. Required for the formation of telomeric siRNAs and the RNA-dependent DNA methylation of asymmetric cytosines in telomeric (5'-CCCTAAA-3') repeats. The polypeptide is RNA-dependent RNA polymerase 2 (Arabidopsis thaliana (Mouse-ear cress)).